A 122-amino-acid polypeptide reads, in one-letter code: Histone H2B subacrosomal variant (122 aa).

Over residues 1–25 (MARNVTKRNKRCRGHQKAIYKKKSH) the composition is skewed to basic residues. The tract at residues 1–30 (MARNVTKRNKRCRGHQKAIYKKKSHSSSES) is disordered.

It belongs to the histone H2B family. Testis-specific. Restricted to the spermatid population of seminiferous epithelium. Not present in Sertoli cells, spermatogonia, spermatocytes or cells of the interstitial tissue (at protein level).

It localises to the cytoplasm. In terms of biological role, may act as an acrosome-nuclear docking protein in sperm. This is Histone H2B subacrosomal variant (SUBH2BV) from Bos taurus (Bovine).